The following is a 314-amino-acid chain: Ribosomal protein L11 methyltransferase (314 aa).

S-adenosyl-L-methionine contacts are provided by Thr152, Gly184, Asp206, and Asn248.

This sequence belongs to the methyltransferase superfamily. PrmA family.

It is found in the cytoplasm. The enzyme catalyses L-lysyl-[protein] + 3 S-adenosyl-L-methionine = N(6),N(6),N(6)-trimethyl-L-lysyl-[protein] + 3 S-adenosyl-L-homocysteine + 3 H(+). Methylates ribosomal protein L11. The chain is Ribosomal protein L11 methyltransferase from Geotalea daltonii (strain DSM 22248 / JCM 15807 / FRC-32) (Geobacter daltonii).